The primary structure comprises 151 residues: 3-hydroxyacyl-[acyl-carrier-protein] dehydratase FabZ (151 aa).

His-49 is an active-site residue.

This sequence belongs to the thioester dehydratase family. FabZ subfamily.

It is found in the cytoplasm. It carries out the reaction a (3R)-hydroxyacyl-[ACP] = a (2E)-enoyl-[ACP] + H2O. Its function is as follows. Involved in unsaturated fatty acids biosynthesis. Catalyzes the dehydration of short chain beta-hydroxyacyl-ACPs and long chain saturated and unsaturated beta-hydroxyacyl-ACPs. This chain is 3-hydroxyacyl-[acyl-carrier-protein] dehydratase FabZ, found in Bordetella petrii (strain ATCC BAA-461 / DSM 12804 / CCUG 43448).